The following is a 206-amino-acid chain: Small ribosomal subunit protein uS4 (206 aa).

Residues 96-156 form the S4 RNA-binding domain; that stretch reads CRLDNVVYRM…EKSLGQLRIV (61 aa).

It belongs to the universal ribosomal protein uS4 family. In terms of assembly, part of the 30S ribosomal subunit. Contacts protein S5. The interaction surface between S4 and S5 is involved in control of translational fidelity.

Functionally, one of the primary rRNA binding proteins, it binds directly to 16S rRNA where it nucleates assembly of the body of the 30S subunit. In terms of biological role, with S5 and S12 plays an important role in translational accuracy. The chain is Small ribosomal subunit protein uS4 from Pseudomonas putida (strain ATCC 47054 / DSM 6125 / CFBP 8728 / NCIMB 11950 / KT2440).